The sequence spans 394 residues: Elongation factor Tu (394 aa).

In terms of domain architecture, tr-type G spans 10-204; sequence KPHVNVGTIG…YLDSYIPEPE (195 aa). Positions 19-26 are G1; the sequence is GHVDHGKT. Residue 19-26 participates in GTP binding; it reads GHVDHGKT. Thr-26 provides a ligand contact to Mg(2+). Residues 60–64 form a G2 region; sequence GITIN. Residues 81-84 are G3; sequence DCPG. GTP-binding positions include 81 to 85 and 136 to 139; these read DCPGH and NKCD. The segment at 136 to 139 is G4; sequence NKCD. Positions 174–176 are G5; sequence SAL.

It belongs to the TRAFAC class translation factor GTPase superfamily. Classic translation factor GTPase family. EF-Tu/EF-1A subfamily. Monomer.

The protein localises to the cytoplasm. It carries out the reaction GTP + H2O = GDP + phosphate + H(+). In terms of biological role, GTP hydrolase that promotes the GTP-dependent binding of aminoacyl-tRNA to the A-site of ribosomes during protein biosynthesis. This Pectobacterium atrosepticum (strain SCRI 1043 / ATCC BAA-672) (Erwinia carotovora subsp. atroseptica) protein is Elongation factor Tu.